The sequence spans 353 residues: Phosphoribosylformylglycinamidine cyclo-ligase (353 aa).

This sequence belongs to the AIR synthase family.

It is found in the cytoplasm. It catalyses the reaction 2-formamido-N(1)-(5-O-phospho-beta-D-ribosyl)acetamidine + ATP = 5-amino-1-(5-phospho-beta-D-ribosyl)imidazole + ADP + phosphate + H(+). It functions in the pathway purine metabolism; IMP biosynthesis via de novo pathway; 5-amino-1-(5-phospho-D-ribosyl)imidazole from N(2)-formyl-N(1)-(5-phospho-D-ribosyl)glycinamide: step 2/2. The sequence is that of Phosphoribosylformylglycinamidine cyclo-ligase from Symbiobacterium thermophilum (strain DSM 24528 / JCM 14929 / IAM 14863 / T).